The following is a 509-amino-acid chain: Cation transporter HKT2;4 (509 aa).

Topologically, residues 1 to 32 are cytoplasmic; the sequence is MPIRLHIFVSSARHAINSSALICRFIAFHLSP. 2 helical membrane-spanning segments follow: residues 33 to 53 and 96 to 116; these read LLIH…ALVV and VLTL…GLVL. The Cytoplasmic segment spans residues 117-164; it reads ESSKQNKHDPENRRVSSVTVCEQSHLEEAIPQTPSMNSTDIKRSCHKY. 2 consecutive transmembrane segments (helical) span residues 165-185 and 237-257; these read LVFV…LLVF and GLLL…PMFL. The Cytoplasmic segment spans residues 258 to 296; it reads RLVIWALRGLRLAKAEEPDFMMNNSSSVGFSHLLPNLQT. 2 helical membrane-spanning segments follow: residues 297-317 and 353-373; these read IFLA…FCCL and CSLV…TPSL. At 374–400 the chain is on the cytoplasmic side; the sequence is TKLFSACQDHKQIGPESDDRTSKGKPF. A run of 2 helical transmembrane segments spans residues 401–421 and 476–496; these read LKTM…LVCI and SFSG…MLYG. Topologically, residues 497–509 are cytoplasmic; it reads RLNSKDSTSARTR.

It belongs to the TrkH potassium transport family. HKT (TC 2.A.38.3) subfamily. In terms of tissue distribution, expressed in spikelets, leaf blades, leaf sheaths, internodes, nodes, the base of stems and roots.

It localises to the cell membrane. The enzyme catalyses K(+)(in) = K(+)(out). It carries out the reaction Mg(2+)(in) = Mg(2+)(out). The catalysed reaction is Ca(2+)(in) = Ca(2+)(out). In terms of biological role, high-affinity potassium transporter that does not show potassium-sodium cotransport. Potassium transport seems to be independent of sodium. Mediates transport of the divalent cations magnesium and calcium in the absence of competing potassium ions. Selectivity for potassium is dominant over divalent cations, and magnesium and calcium transport may be small and may depend on competing potassium concentrations. This chain is Cation transporter HKT2;4, found in Oryza sativa subsp. japonica (Rice).